The following is an 89-amino-acid chain: Small ribosomal subunit protein uS17 (89 aa).

The protein belongs to the universal ribosomal protein uS17 family. As to quaternary structure, part of the 30S ribosomal subunit.

Functionally, one of the primary rRNA binding proteins, it binds specifically to the 5'-end of 16S ribosomal RNA. The sequence is that of Small ribosomal subunit protein uS17 from Baumannia cicadellinicola subsp. Homalodisca coagulata.